A 1164-amino-acid chain; its full sequence is MDPIRSRTPSPARELLPGPQPDGVQPTADRGVSPPAGGPLDGLPARRTMSRTRLPSPPAPSPAFSAGSFSDLLRQFDPSLFNTSLFDSLPPFGAHHTEAATGEWDEVQSGLRAADAPPPTMRVAVTAARPPRAKPAPRRRAAQPSDASPAAQVDLRTLGYSQQQQEKIKPKVRSTVAQHHEALVGHGFTHAHIVALSQHPAALGTVAVKYQDMIAALPEATHEAIVGVGKQWSGARALEALLTVAGELRGPPLQLDTGQLLKIAKRGGVTAVEAVHAWRNALTGAPLNLTPEQVVAIASHDGGKQALETVQRLLPVLCQAHGLTPQQVVAIASNGGGKQALETVQRLLPVLCQAHGLTPQQVVAIASNSGGKQALETVQRLLPVLCQAHGLTPEQVVAIASNGGGKQALETVQRLLPVLCQAHGLTPEQVVAIASNIGGKQALETVQALLPVLCQAHGLTPEQVVAIASNIGGKQALETVQALLPVLCQAHGLTPEQVVAIASNIGGKQALETVQALLPVLCQAHGLTPEQVVAIASHDGGKQALETVQRLLPVLCQAHGLTPEQVVAIASHDGGKQALETVQRLLPVLCQAHGLTPQQVVAIASNGGGKQALETVQRLLPVLCQAHGLTPEQVVAIASNSGGKQALETVQALLPVLCQAHGLTPEQVVAIASNSGGKQALETVQRLLPVLCQAHGLTPEQVVAIASHDGGKQALETVQRLLPVLCQAHGLTPEQVVAIASHDGGKQALETVQRLLPVLCQAHGLTPEQVVAIASHDGGKQALETVQRLLPVLCQAHGLTPQQVVAIASNGGGRPALETVQRLLPVLCQAHGLTPEQVVAIASHDGGKQALETVQRLLPVLCQAHGLTPQQVVAIASNGGGRPALESIVAQLSRPDPALAALTNDHLVALACLGGRPALDAVKKGLPHAPALIKRTNRRIPERTSHRVADHAQVVRVLGFFQCHSHPAQAFDDAMTQFGMSRHGLLQLFRRVGVTELEARSGTLPPASQRWDRILQASGMKRAKPSPTSTQTPDQASLHAFADSLERDLDAPSPMHEGDQTRASSRKRSRSDRAVTGPSAQQSFEVRVPEQRDALHLPLSWRVKRPRTSIGGGLPDPGTPTAADLAASSTVMREQDEDPFAGAADDFPAFNEEELAWLMELLPQ.

2 disordered regions span residues 1 to 68 (MDPI…SAGS) and 128 to 152 (ARPPRAKPAPRRRAAQPSDASPAAQ). The span at 131–141 (PRAKPAPRRRA) shows a compositional bias: basic residues. Residues 142-151 (AQPSDASPAA) are compositionally biased toward low complexity. The Cryptic repeat -1 repeat unit spans residues 225 to 254 (IVGVGKQWSGARALEALLTVAGELRGPPLQ). The Cryptic repeat 0 repeat unit spans residues 255-288 (LDTGQLLKIAKRGGVTAVEAVHAWRNALTGAPLN). Core repeat repeat units follow at residues 289-322 (LTPEQVVAIASHDGGKQALETVQRLLPVLCQAHG), 323-356 (LTPQQVVAIASNGGGKQALETVQRLLPVLCQAHG), 357-390 (LTPQQVVAIASNSGGKQALETVQRLLPVLCQAHG), 391-424 (LTPEQVVAIASNGGGKQALETVQRLLPVLCQAHG), 425-458 (LTPEQVVAIASNIGGKQALETVQALLPVLCQAHG), 459-492 (LTPEQVVAIASNIGGKQALETVQALLPVLCQAHG), 493-526 (LTPEQVVAIASNIGGKQALETVQALLPVLCQAHG), 527-560 (LTPEQVVAIASHDGGKQALETVQRLLPVLCQAHG), 561-594 (LTPEQVVAIASHDGGKQALETVQRLLPVLCQAHG), 595-628 (LTPQQVVAIASNGGGKQALETVQRLLPVLCQAHG), 629-662 (LTPEQVVAIASNSGGKQALETVQALLPVLCQAHG), 663-696 (LTPEQVVAIASNSGGKQALETVQRLLPVLCQAHG), 697-730 (LTPEQVVAIASHDGGKQALETVQRLLPVLCQAHG), 731-764 (LTPEQVVAIASHDGGKQALETVQRLLPVLCQAHG), 765-798 (LTPEQVVAIASHDGGKQALETVQRLLPVLCQAHG), 799-832 (LTPQQVVAIASNGGGRPALETVQRLLPVLCQAHG), and 833-866 (LTPEQVVAIASHDGGKQALETVQRLLPVLCQAHG). One copy of the Core repeat 17.5 repeat lies at 867-886 (LTPQQVVAIASNGGGRPALE). A Nuclear localization signal NLS1 motif is present at residues 1021-1024 (KRAK). Basic and acidic residues predominate over residues 1048–1060 (DLDAPSPMHEGDQ). Residues 1048-1091 (DLDAPSPMHEGDQTRASSRKRSRSDRAVTGPSAQQSFEVRVPEQ) form a disordered region. Residues 1067-1070 (KRSR) carry the Nuclear localization signal NLS2 motif. The Nuclear localization signal NLS3 motif lies at 1104-1107 (KRPR). Positions 1135–1164 (QDEDPFAGAADDFPAFNEEELAWLMELLPQ) are acidic activation domain AAD.

It belongs to the transcription activator-like effector (TALE) family. Forms a homodimer in the plant cell cytoplasm, prior to nuclear import. Interacts with the plant cell importin alpha-1 (Caimp alpha-1) and importin alpha-2 (Caimp alpha-2) via the nuclear localization signal NLS2, but not via NLS3.

It is found in the secreted. Its subcellular location is the host nucleus. Its function is as follows. Avirulence protein. Acts as a transcription factor in C.annuum plants. In susceptible plants lacking the Bs3 resistance gene induces expression of a number of genes, including genes homologous to a family of auxin-induced genes, alpha-expansin genes, pectate lyase, anthocyanidin glucoside rhamnosyl transferase and at least one transcription factor, UPA20. Their expression leads to plant hypertrophy in mesophyll cells, probably mainly mediated by UPA20. In resistant plants induces the hypersensitive response (HR), by inducing transcription of plant Bs3 which induces HR; a mutated AvrBs3 missing repeats 11-14 does not induce expression of Bs3 but does induce Bs3-E, a Bs3 allele with a modified promoter. Binds DNA corresponding to the upa-box in sequence-specific manner. The sequence is that of Avirulence protein AvrBs3 (avrBs3) from Xanthomonas euvesicatoria.